The following is a 647-amino-acid chain: Putative ferric-chelate reductase 1 homolog (647 aa).

Residues Trp10–Ser30 traverse the membrane as a helical segment. Residues Pro25–Pro195 enclose the Reelin domain. Asn127 and Asn158 each carry an N-linked (GlcNAc...) asparagine glycan. The 124-residue stretch at Thr245–Gly368 folds into the DOMON domain. Positions Lys372–Ala570 constitute a Cytochrome b561 domain. The helical transmembrane segment at Leu408–Ala428 threads the bilayer. 2 residues coordinate heme b: His409 and His450. The next 5 membrane-spanning stretches (helical) occupy residues Leu452 to Leu472, His480 to Phe500, Gly515 to Val535, Trp548 to Gly568, and Leu616 to Val636. The heme b site is built by His480 and His516.

This sequence belongs to the FRRS1 family. Requires heme b as cofactor.

The protein resides in the membrane. Functionally, putative ferric-chelate reductases reduce Fe(3+) to Fe(2+) before its transport from the endosome to the cytoplasm. In Drosophila melanogaster (Fruit fly), this protein is Putative ferric-chelate reductase 1 homolog.